Consider the following 429-residue polypeptide: UDP-N-acetylglucosamine 1-carboxyvinyltransferase (429 aa).

22-23 (KN) provides a ligand contact to phosphoenolpyruvate. Position 102 (R102) interacts with UDP-N-acetyl-alpha-D-glucosamine. Residue C126 is the Proton donor of the active site. At C126 the chain carries 2-(S-cysteinyl)pyruvic acid O-phosphothioketal. Residues 131 to 135 (RPVDL), D316, and I338 each bind UDP-N-acetyl-alpha-D-glucosamine.

Belongs to the EPSP synthase family. MurA subfamily.

Its subcellular location is the cytoplasm. It carries out the reaction phosphoenolpyruvate + UDP-N-acetyl-alpha-D-glucosamine = UDP-N-acetyl-3-O-(1-carboxyvinyl)-alpha-D-glucosamine + phosphate. It participates in cell wall biogenesis; peptidoglycan biosynthesis. Its function is as follows. Cell wall formation. Adds enolpyruvyl to UDP-N-acetylglucosamine. This chain is UDP-N-acetylglucosamine 1-carboxyvinyltransferase, found in Rhodopseudomonas palustris (strain HaA2).